The chain runs to 332 residues: o-succinylbenzoate synthase (332 aa).

Lys-135 (proton donor) is an active-site residue. Positions 163, 192, and 215 each coordinate Mg(2+). Lys-241 (proton acceptor) is an active-site residue.

The protein belongs to the mandelate racemase/muconate lactonizing enzyme family. MenC type 1 subfamily. Requires a divalent metal cation as cofactor.

The enzyme catalyses (1R,6R)-6-hydroxy-2-succinyl-cyclohexa-2,4-diene-1-carboxylate = 2-succinylbenzoate + H2O. The protein operates within quinol/quinone metabolism; 1,4-dihydroxy-2-naphthoate biosynthesis; 1,4-dihydroxy-2-naphthoate from chorismate: step 4/7. It participates in quinol/quinone metabolism; menaquinone biosynthesis. Converts 2-succinyl-6-hydroxy-2,4-cyclohexadiene-1-carboxylate (SHCHC) to 2-succinylbenzoate (OSB). In Vibrio cholerae serotype O1 (strain ATCC 39315 / El Tor Inaba N16961), this protein is o-succinylbenzoate synthase.